Reading from the N-terminus, the 293-residue chain is Probable 2-(5''-triphosphoribosyl)-3'-dephosphocoenzyme-A synthase (293 aa).

It belongs to the CitG/MdcB family.

It catalyses the reaction 3'-dephospho-CoA + ATP = 2'-(5''-triphospho-alpha-D-ribosyl)-3'-dephospho-CoA + adenine. Involved in the formation of 2-(5''-phosphoribosyl)-3'-dephosphocoenzyme-A, the prosthetic group of the acyl-carrier protein of the malonate decarboxylase. This Pseudomonas aeruginosa (strain ATCC 15692 / DSM 22644 / CIP 104116 / JCM 14847 / LMG 12228 / 1C / PRS 101 / PAO1) protein is Probable 2-(5''-triphosphoribosyl)-3'-dephosphocoenzyme-A synthase.